Consider the following 228-residue polypeptide: Cell surface Cu-only superoxide dismutase 5 (228 aa).

Residues 1–15 form the signal peptide; that stretch reads MKYLSIFLLATFALA. Asn53 carries N-linked (GlcNAc...) asparagine glycosylation. Cu cation-binding residues include His75 and His77. The N-linked (GlcNAc...) asparagine glycan is linked to Asn86. Residues Cys87 and Cys162 are joined by a disulfide bond. Residue His93 participates in Cu cation binding. A glycan (N-linked (GlcNAc...) asparagine) is linked at Asn98. His153 serves as a coordination point for Cu cation. Asn156, Asn164, Asn176, Asn181, and Asn192 each carry an N-linked (GlcNAc...) asparagine glycan. The segment covering 176–201 has biased composition (low complexity); it reads NTTMSNSSSSSSQSAVNTSSSMASTA. Residues 176–204 form a disordered region; sequence NTTMSNSSSSSSQSAVNTSSSMASTAPQG. Asn205 is lipidated: GPI-anchor amidated asparagine. Positions 206-228 are cleaved as a propeptide — removed in mature form; the sequence is GAERAVVNGLLAAGVVGVIAALI.

It belongs to the Cu-Zn superoxide dismutase family. Monomer. Cu cation is required as a cofactor. The GPI-anchor is attached to the protein in the endoplasmic reticulum and serves to target the protein to the cell surface. There, the glucosamine-inositol phospholipid moiety is cleaved off and the GPI-modified mannoprotein is covalently attached via its lipidless GPI glycan remnant to the 1,6-beta-glucan of the outer cell wall layer.

It is found in the secreted. It localises to the cell wall. Its subcellular location is the membrane. It carries out the reaction 2 superoxide + 2 H(+) = H2O2 + O2. With respect to regulation, secreted in a disulfide-oxidized form and apo-pools of secreted SOD5 can readily capture extracellular copper for rapid induction of enzyme activity. Superoxide dismutases serve to convert damaging superoxide radicals, a key form of ROS, to less damaging hydrogen peroxide that can be converted into water by catalase action. Degrades host-derived reactive oxygen species to escape innate immune surveillance. Involved in the occurrence of miconazole-tolerant persisters in biofilms. Persisters are cells that survive high doses of an antimicrobial agent. The unusual attributes of SOD5-like fungal proteins, including the absence of zinc and an open active site that readily captures extracellular copper, make these SODs well suited to meet challenges in zinc and copper availability at the host-pathogen interface. In Candida albicans (strain SC5314 / ATCC MYA-2876) (Yeast), this protein is Cell surface Cu-only superoxide dismutase 5 (SOD5).